The sequence spans 219 residues: Vesicle-associated membrane protein 712 (219 aa).

Over 1 to 189 the chain is Cytoplasmic; it reads MSILYALVAR…NNTVWWRNCK (189 aa). Residues 7–111 enclose the Longin domain; it reads LVARGTVVLA…AMNDEFSRVL (105 aa). One can recognise a v-SNARE coiled-coil homology domain in the interval 126 to 186; it reads TISRIKGEMN…RRFNNTVWWR (61 aa). A helical; Anchor for type IV membrane protein transmembrane segment spans residues 190-210; sequence LTLLLILVLLVIIYIGVAFAC. Topologically, residues 211–219 are vesicular; sequence HGPTLPSCV.

The protein belongs to the synaptobrevin family. In terms of tissue distribution, expressed in flowers, leaves, stems and roots.

The protein resides in the vacuole membrane. The protein localises to the prevacuolar compartment membrane. Involved in the targeting and/or fusion of transport vesicles to their target membrane. This chain is Vesicle-associated membrane protein 712, found in Arabidopsis thaliana (Mouse-ear cress).